The following is a 585-amino-acid chain: Protein DENND6B (585 aa).

A uDENN domain is found at E43–V214. The cDENN domain maps to V246–K373. Residues L375–R499 enclose the dDENN domain.

It belongs to the DENND6 family.

The protein resides in the recycling endosome. It is found in the cytoplasm. Guanine nucleotide exchange factor (GEF) for RAB14. Also has some, lesser GEF activity towards RAB35. In Homo sapiens (Human), this protein is Protein DENND6B (DENND6B).